Here is a 422-residue protein sequence, read N- to C-terminus: MSADGKFGDYGGQYVPEALMPAIEELTDAYERYVLDNEDGFMDDFRARLRDFGGRPTPLQRADRLSERYDREVYLKREDLLHGGAHKLNNALGQVLLAKYMGKERIIAETGAGQHGTATAMACAHLDMPCEIYMGERDINRQRPNVFRMKLNGSEVNPVTVGRGTLKEAISETMRDWATNVEDTHYVIGSVVGPHPFPSMVRDFQSVISEEARTQAREKLGRLPDAVVACAGGGSNTMGAFAEFVDDEETALYAVEAGGSTLEVDEEAGVAPNSASLTTGSEGILHGARTRLLQDRDGQIMESHSVSSGLDYAGVGPELAHLVDTGRVTAVNVDDDAALTAFHRLSQMEGIIPALESAHAFGYLESVVGPDAPDAENADDLGEYVVVNVSGRGDKDLESAIEETYERDIDIAPNMDEFTGGL.

K87 carries the post-translational modification N6-(pyridoxal phosphate)lysine.

Belongs to the TrpB family. Tetramer of two alpha and two beta chains. Requires pyridoxal 5'-phosphate as cofactor.

The catalysed reaction is (1S,2R)-1-C-(indol-3-yl)glycerol 3-phosphate + L-serine = D-glyceraldehyde 3-phosphate + L-tryptophan + H2O. Its pathway is amino-acid biosynthesis; L-tryptophan biosynthesis; L-tryptophan from chorismate: step 5/5. Its function is as follows. The beta subunit is responsible for the synthesis of L-tryptophan from indole and L-serine. The chain is Tryptophan synthase beta chain (trpB) from Haloferax volcanii (strain ATCC 29605 / DSM 3757 / JCM 8879 / NBRC 14742 / NCIMB 2012 / VKM B-1768 / DS2) (Halobacterium volcanii).